A 353-amino-acid polypeptide reads, in one-letter code: MTNEFAIPRSVEWKETYIRILNQQKLPDVTEYVELETKEDVFDAIVTLKVRGAPAIGITAAFGLALSAKSFEARDLSDFRRQFADVKTYLNSSRPTAVNLAWALDRLTDSIRDAISINEAKTTLVHEAIQIQIEDEETCRMIGQNALHLFKKGDQIMTICNAGSIATSRYGTALAPFYLAKQKDLGLHIYACETRPVLQGSRLTAWELMQGGIDVTLITDSMAAHTMKEKHISAVIVGADRIAKNGDTANKIGTYGLAILANAFQIPFFVAAPLSTFDLQIENGDQIPIEERDPDEVRQISGIRTAPEDVPVFNPAFDITPGSLISGIITEKGIVTGSYTEEIEQLFADCQLS.

Substrate is bound by residues 51–53 (RGA), Arg-94, and Gln-199. The active-site Proton donor is the Asp-240. Position 250–251 (250–251 (NK)) interacts with substrate.

This sequence belongs to the eIF-2B alpha/beta/delta subunits family. MtnA subfamily. In terms of assembly, homodimer.

The catalysed reaction is 5-(methylsulfanyl)-alpha-D-ribose 1-phosphate = 5-(methylsulfanyl)-D-ribulose 1-phosphate. It participates in amino-acid biosynthesis; L-methionine biosynthesis via salvage pathway; L-methionine from S-methyl-5-thio-alpha-D-ribose 1-phosphate: step 1/6. Catalyzes the interconversion of methylthioribose-1-phosphate (MTR-1-P) into methylthioribulose-1-phosphate (MTRu-1-P). The sequence is that of Methylthioribose-1-phosphate isomerase from Bacillus velezensis (strain DSM 23117 / BGSC 10A6 / LMG 26770 / FZB42) (Bacillus amyloliquefaciens subsp. plantarum).